A 177-amino-acid polypeptide reads, in one-letter code: Large ribosomal subunit protein uL6 (177 aa).

Belongs to the universal ribosomal protein uL6 family. In terms of assembly, part of the 50S ribosomal subunit.

Functionally, this protein binds to the 23S rRNA, and is important in its secondary structure. It is located near the subunit interface in the base of the L7/L12 stalk, and near the tRNA binding site of the peptidyltransferase center. This is Large ribosomal subunit protein uL6 from Buchnera aphidicola subsp. Acyrthosiphon kondoi (Acyrthosiphon kondoi symbiotic bacterium).